The primary structure comprises 239 residues: Ribonuclease PH (239 aa).

Phosphate-binding positions include Arg86 and 124 to 126 (GTR).

Belongs to the RNase PH family. In terms of assembly, homohexameric ring arranged as a trimer of dimers.

The enzyme catalyses tRNA(n+1) + phosphate = tRNA(n) + a ribonucleoside 5'-diphosphate. In terms of biological role, phosphorolytic 3'-5' exoribonuclease that plays an important role in tRNA 3'-end maturation. Removes nucleotide residues following the 3'-CCA terminus of tRNAs; can also add nucleotides to the ends of RNA molecules by using nucleoside diphosphates as substrates, but this may not be physiologically important. Probably plays a role in initiation of 16S rRNA degradation (leading to ribosome degradation) during starvation. The sequence is that of Ribonuclease PH from Rickettsia felis (strain ATCC VR-1525 / URRWXCal2) (Rickettsia azadi).